A 313-amino-acid polypeptide reads, in one-letter code: Jacalin-related lectin 8 (313 aa).

The N-terminal stretch at 1-23 (MFIIYLFIFLSSAIIDSNGVAMA) is a signal peptide. Jacalin-type lectin domains lie at 24–163 (QKIE…YVKT) and 165–309 (PTKS…YFSP).

The protein belongs to the jacalin lectin family.

The polypeptide is Jacalin-related lectin 8 (JAL8) (Arabidopsis thaliana (Mouse-ear cress)).